A 247-amino-acid polypeptide reads, in one-letter code: Bax inhibitor 1 (247 aa).

N-acetylmethionine is present on M1. Transmembrane regions (helical) follow at residues 58–78 (VLWNIGGILTTIGCIGTMIWL), 92–112 (LLFVSAVLEGASVGPLIKVAI), 118–138 (ILITAFVGTAIAFVCFSAAAM), 145–165 (YLYLGGLLSSGLSMLMWLQFA), 173–193 (ASIFKFELYFGLLIFVGYMVV), and 212–232 (HSLTLFTDFVAVFVRILIIML).

This sequence belongs to the BI1 family. In terms of assembly, interacts (via C-terminus) with calmodulin, CYTB5-B and CYTB5-D. Interacts indirectly with FAH1 via CYTB5-D. In terms of tissue distribution, expressed in root tips, root vasculature, flower tissues, including stamens and sepals, and in the base of siliques. Not detected in mature leaves.

It localises to the endoplasmic reticulum membrane. Its function is as follows. Suppressor of apoptosis. Modulator of endoplasmic reticulum stress-mediated programmed cell death. Involved in methyl jasmonate-induced leaf senescence through regulating cytoplasmic calcium level. The polypeptide is Bax inhibitor 1 (BI-1) (Arabidopsis thaliana (Mouse-ear cress)).